The chain runs to 756 residues: Hormone-sensitive lipase (756 aa).

The Involved in the stabilization of the negatively charged intermediate by the formation of the oxyanion hole motif lies at 350 to 352 (HGG). The active site involves Ser424. Disordered regions lie at residues 542 to 570 (SVSK…TDSL) and 581 to 600 (RNSS…ETLG). Ser552 carries the post-translational modification Phosphoserine; by PKA. A Phosphoserine; by AMPK modification is found at Ser554. Over residues 581–596 (RNSSDTTDTPELSLSA) the composition is skewed to polar residues. Phosphoserine is present on residues Ser595 and Ser649. Catalysis depends on residues Asp692 and His722.

This sequence belongs to the 'GDXG' lipolytic enzyme family. In terms of assembly, monomer and homodimer. Interacts with CAVIN1 in the adipocyte cytoplasm. Interacts with PLIN5. Phosphorylation by AMPK reduces its translocation towards the lipid droplets.

The protein resides in the cell membrane. The protein localises to the membrane. Its subcellular location is the caveola. It localises to the cytoplasm. It is found in the cytosol. The protein resides in the lipid droplet. The enzyme catalyses a diacylglycerol + H2O = a monoacylglycerol + a fatty acid + H(+). It catalyses the reaction a triacylglycerol + H2O = a diacylglycerol + a fatty acid + H(+). It carries out the reaction a monoacylglycerol + H2O = glycerol + a fatty acid + H(+). The catalysed reaction is Hydrolyzes glycerol monoesters of long-chain fatty acids.. The enzyme catalyses 1,2-di-(9Z-octadecenoyl)-glycerol + (9Z)-octadecenoate + H(+) = 1,2,3-tri-(9Z-octadecenoyl)-glycerol + H2O. It catalyses the reaction 2,3-di-(9Z)-octadecenoyl-sn-glycerol + H2O = 2-(9Z-octadecenoyl)-glycerol + (9Z)-octadecenoate + H(+). It carries out the reaction cholesteryl (9Z-octadecenoate) + H2O = cholesterol + (9Z)-octadecenoate + H(+). The catalysed reaction is 1,2,3-tri-(9Z-octadecenoyl)-glycerol + H2O = di-(9Z)-octadecenoylglycerol + (9Z)-octadecenoate + H(+). The enzyme catalyses all-trans-retinyl hexadecanoate + H2O = all-trans-retinol + hexadecanoate + H(+). It catalyses the reaction 1,2-di-(9Z-octadecenoyl)-glycerol + H2O = (9Z-octadecenoyl)-glycerol + (9Z)-octadecenoate + H(+). It carries out the reaction 2-(5Z,8Z,11Z,14Z-eicosatetraenoyl)-glycerol + H2O = glycerol + (5Z,8Z,11Z,14Z)-eicosatetraenoate + H(+). The catalysed reaction is 1-(9Z-octadecenoyl)-glycerol + H2O = glycerol + (9Z)-octadecenoate + H(+). The enzyme catalyses 2-(9Z-octadecenoyl)-glycerol + H2O = glycerol + (9Z)-octadecenoate + H(+). It catalyses the reaction 1-O-hexadecyl-2-acetyl-sn-glycerol + H2O = 1-O-hexadecyl-sn-glycerol + acetate + H(+). It carries out the reaction 1,2-di-(9Z-octadecenoyl)-sn-glycerol + H2O = (9Z-octadecenoyl)-glycerol + (9Z)-octadecenoate + H(+). The catalysed reaction is 1,3-di-(9Z-octadecenoyl)-glycerol + H2O = 1-(9Z-octadecenoyl)-glycerol + (9Z)-octadecenoate + H(+). The enzyme catalyses 1,2-di-(9Z-octadecenoyl)-glycerol + H2O = 2-(9Z-octadecenoyl)-glycerol + (9Z)-octadecenoate + H(+). Its pathway is glycerolipid metabolism; triacylglycerol degradation. Functionally, lipase with broad substrate specificity, catalyzing the hydrolysis of triacylglycerols (TAGs), diacylglycerols (DAGs), monoacylglycerols (MAGs), cholesteryl esters and retinyl esters. Shows a preferential hydrolysis of DAGs over TAGs and MAGs. Preferentially hydrolyzes fatty acid (FA) esters at the sn-3 position of the glycerol backbone in DAGs and FA esters at the sn-1 and sn-2 positions of the glycerol backbone in TAGs. Catalyzes the hydrolysis of 2-arachidonoylglycerol, an endocannabinoid and of 2-acetyl monoalkylglycerol ether, the penultimate precursor of the pathway for de novo synthesis of platelet-activating factor. In adipose tissue and heart, it primarily hydrolyzes stored triglycerides to free fatty acids, while in steroidogenic tissues, it principally converts cholesteryl esters to free cholesterol for steroid hormone production. The chain is Hormone-sensitive lipase (LIPE) from Bos taurus (Bovine).